We begin with the raw amino-acid sequence, 346 residues long: Uroporphyrinogen decarboxylase (346 aa).

Substrate is bound by residues 23-27 (RQAGR), Asp72, Tyr149, Thr204, and His318.

It belongs to the uroporphyrinogen decarboxylase family. Homodimer.

It is found in the cytoplasm. It catalyses the reaction uroporphyrinogen III + 4 H(+) = coproporphyrinogen III + 4 CO2. It participates in porphyrin-containing compound metabolism; protoporphyrin-IX biosynthesis; coproporphyrinogen-III from 5-aminolevulinate: step 4/4. Functionally, catalyzes the decarboxylation of four acetate groups of uroporphyrinogen-III to yield coproporphyrinogen-III. The polypeptide is Uroporphyrinogen decarboxylase (Synechococcus sp. (strain JA-2-3B'a(2-13)) (Cyanobacteria bacterium Yellowstone B-Prime)).